Here is a 225-residue protein sequence, read N- to C-terminus: Membrane protein (225 aa).

Topologically, residues 1–20 (MSNETNCTLDFEQSVELFKE) are virion surface. A helical membrane pass occupies residues 21 to 41 (YNLFITAFLLFLTIILQYGYA). The Intravirion segment spans residues 42–51 (TRSKFIYILK). The helical transmembrane segment at 52-72 (MIVLWCFWPLNIAVGVISCIY) threads the bilayer. Topologically, residues 73–77 (PPNTG) are virion surface. A helical membrane pass occupies residues 78–98 (GLVAAIILTVFACLSFVGYWI). The Intravirion portion of the chain corresponds to 99–225 (QSIRLFKRCR…VATGGSSLYT (127 aa)).

It belongs to the gammacoronaviruses M protein family. Homomultimer. Interacts with envelope E protein in the budding compartment of the host cell, which is located between endoplasmic reticulum and the Golgi complex. Forms a complex with HE and S proteins. Interacts with nucleocapsid N protein. This interaction probably participates in RNA packaging into the virus.

It is found in the virion membrane. It localises to the host Golgi apparatus membrane. Component of the viral envelope that plays a central role in virus morphogenesis and assembly via its interactions with other viral proteins. This Gallus gallus (Chicken) protein is Membrane protein.